Here is a 188-residue protein sequence, read N- to C-terminus: ATP synthase subunit delta (188 aa).

The protein belongs to the ATPase delta chain family. In terms of assembly, F-type ATPases have 2 components, F(1) - the catalytic core - and F(0) - the membrane proton channel. F(1) has five subunits: alpha(3), beta(3), gamma(1), delta(1), epsilon(1). F(0) has three main subunits: a(1), b(2) and c(10-14). The alpha and beta chains form an alternating ring which encloses part of the gamma chain. F(1) is attached to F(0) by a central stalk formed by the gamma and epsilon chains, while a peripheral stalk is formed by the delta and b chains.

The protein resides in the cell inner membrane. F(1)F(0) ATP synthase produces ATP from ADP in the presence of a proton or sodium gradient. F-type ATPases consist of two structural domains, F(1) containing the extramembraneous catalytic core and F(0) containing the membrane proton channel, linked together by a central stalk and a peripheral stalk. During catalysis, ATP synthesis in the catalytic domain of F(1) is coupled via a rotary mechanism of the central stalk subunits to proton translocation. Functionally, this protein is part of the stalk that links CF(0) to CF(1). It either transmits conformational changes from CF(0) to CF(1) or is implicated in proton conduction. The sequence is that of ATP synthase subunit delta from Rhizobium leguminosarum bv. trifolii (strain WSM2304).